A 318-amino-acid chain; its full sequence is Xanthocillin biosynthesis cluster transcription factor xanC (318 aa).

Positions 1-27 are enriched in basic and acidic residues; the sequence is MHSQTTKDEQSKDDSSNEKQDAIERRR. The tract at residues 1-39 is disordered; sequence MHSQTTKDEQSKDDSSNEKQDAIERRRLQNRLSQRNHRR. Residues 20 to 52 form the bZIP domain; that stretch reads QDAIERRRLQNRLSQRNHRRKIRDRIAKLQERV. Residues 25–40 are basic motif; it reads RRRLQNRLSQRNHRRK. A leucine-zipper region spans residues 41-48; sequence IRDRIAKL. 3 disordered regions span residues 71–107, 123–171, and 269–318; these read PPAA…QRNV, PSSS…FSLD, and GRHC…SMML. 2 stretches are compositionally biased toward low complexity: residues 123–139 and 147–171; these read PSSS…PFDL and STNS…FSLD. Residues 293-318 show a composition bias toward polar residues; that stretch reads APSSTPFCPLHPSQSSSLDNYQSMML.

The protein belongs to the bZIP family.

The protein resides in the nucleus. Its function is as follows. Transcription regulator that specifically up-regulates the gene cluster that mediates the biosynthesis of the isocyanide xanthocillin and its derivatives. This chain is Xanthocillin biosynthesis cluster transcription factor xanC, found in Aspergillus fumigatus (strain ATCC MYA-4609 / CBS 101355 / FGSC A1100 / Af293) (Neosartorya fumigata).